The sequence spans 238 residues: Ribonuclease PH (238 aa).

Phosphate is bound by residues arginine 86 and 124 to 126; that span reads GTR.

It belongs to the RNase PH family. Homohexameric ring arranged as a trimer of dimers.

The catalysed reaction is tRNA(n+1) + phosphate = tRNA(n) + a ribonucleoside 5'-diphosphate. In terms of biological role, phosphorolytic 3'-5' exoribonuclease that plays an important role in tRNA 3'-end maturation. Removes nucleotide residues following the 3'-CCA terminus of tRNAs; can also add nucleotides to the ends of RNA molecules by using nucleoside diphosphates as substrates, but this may not be physiologically important. Probably plays a role in initiation of 16S rRNA degradation (leading to ribosome degradation) during starvation. The polypeptide is Ribonuclease PH (Alkalilimnicola ehrlichii (strain ATCC BAA-1101 / DSM 17681 / MLHE-1)).